The primary structure comprises 146 residues: Prostaglandin E synthase 3 (146 aa).

The CS domain maps to 1-76 (VFIEFCVEDS…ESGQAWPRLT (76 aa)). Residues 110 to 146 (SEMMNNMGGDDDVDLPEVDGADDDSPDSDDEKMPDLE) form a disordered region. Residues 118-139 (GDDDVDLPEVDGADDDSPDSDD) show a composition bias toward acidic residues.

It belongs to the p23/wos2 family. In terms of assembly, binds to telomerase. Binds to the progesterone receptor.

Its subcellular location is the cytoplasm. The enzyme catalyses prostaglandin H2 = prostaglandin E2. It participates in lipid metabolism; prostaglandin biosynthesis. Its function is as follows. Molecular chaperone. In Gallus gallus (Chicken), this protein is Prostaglandin E synthase 3 (PTGES3).